The following is a 266-amino-acid chain: 26 kDa endochitinase 2 (266 aa).

A signal peptide spans 1-23 (MRSLAVVVAVVATVAMAIGTARG). Disulfide bonds link C46/C108, C120/C128, and C227/C259. E90 (proton donor) is an active-site residue.

Belongs to the glycosyl hydrolase 19 family. Chitinase class II subfamily.

The enzyme catalyses Random endo-hydrolysis of N-acetyl-beta-D-glucosaminide (1-&gt;4)-beta-linkages in chitin and chitodextrins.. Defense against chitin-containing fungal pathogens. This chain is 26 kDa endochitinase 2, found in Hordeum vulgare (Barley).